A 287-amino-acid polypeptide reads, in one-letter code: ATP synthase gamma chain (287 aa).

The protein belongs to the ATPase gamma chain family. In terms of assembly, F-type ATPases have 2 components, CF(1) - the catalytic core - and CF(0) - the membrane proton channel. CF(1) has five subunits: alpha(3), beta(3), gamma(1), delta(1), epsilon(1). CF(0) has three main subunits: a, b and c.

It is found in the cell membrane. Functionally, produces ATP from ADP in the presence of a proton gradient across the membrane. The gamma chain is believed to be important in regulating ATPase activity and the flow of protons through the CF(0) complex. In Bacillus caldotenax, this protein is ATP synthase gamma chain.